A 289-amino-acid chain; its full sequence is Pantothenate synthetase (289 aa).

33-40 (MGYLHEGH) lines the ATP pocket. Residue His40 is the Proton donor of the active site. Gln70 contacts (R)-pantoate. Gln70 contributes to the beta-alanine binding site. 157–160 (GEKD) lines the ATP pocket. Gln163 lines the (R)-pantoate pocket. ATP-binding positions include Val186 and 194–197 (LSSR).

Belongs to the pantothenate synthetase family. As to quaternary structure, homodimer.

The protein localises to the cytoplasm. It carries out the reaction (R)-pantoate + beta-alanine + ATP = (R)-pantothenate + AMP + diphosphate + H(+). The protein operates within cofactor biosynthesis; (R)-pantothenate biosynthesis; (R)-pantothenate from (R)-pantoate and beta-alanine: step 1/1. Its function is as follows. Catalyzes the condensation of pantoate with beta-alanine in an ATP-dependent reaction via a pantoyl-adenylate intermediate. The polypeptide is Pantothenate synthetase (Anaeromyxobacter dehalogenans (strain 2CP-C)).